The sequence spans 298 residues: Cation-efflux pump FieF (298 aa).

A helical membrane pass occupies residues 24–44 (LLIKIFAWWYTGSVSILAALV). Zn(2+) is bound by residues Asp-45 and Asp-49. 2 helical membrane-spanning segments follow: residues 80-100 (SLAA…LTSI) and 112-132 (PGVG…LVTF). 2 residues coordinate Zn(2+): His-151 and Asp-155. Transmembrane regions (helical) follow at residues 154–174 (SDVM…YGWH) and 176–196 (ADAL…LRMG).

This sequence belongs to the cation diffusion facilitator (CDF) transporter (TC 2.A.4) family. FieF subfamily. Homodimer.

It is found in the cell inner membrane. It catalyses the reaction Zn(2+)(in) + H(+)(out) = Zn(2+)(out) + H(+)(in). It carries out the reaction Cd(2+)(in) + H(+)(out) = Cd(2+)(out) + H(+)(in). The enzyme catalyses Fe(2+)(in) + H(+)(out) = Fe(2+)(out) + H(+)(in). Divalent metal cation transporter which exports Zn(2+), Cd(2+) and possibly Fe(2+). May be involved in zinc and iron detoxification by efflux. The protein is Cation-efflux pump FieF of Salmonella typhi.